The sequence spans 279 residues: Large ribosomal subunit protein uL2 (279 aa).

Disordered stretches follow at residues 31-61 (KSLL…HKRH) and 222-279 (GMAM…RNAK). Residues 49–61 (KTSRHRGGGHKRH) show a composition bias toward basic residues. Positions 232-242 (MGGGEGKSKSG) are enriched in gly residues. Basic residues predominate over residues 259–268 (LKTRNRKKAS).

It belongs to the universal ribosomal protein uL2 family. As to quaternary structure, part of the 50S ribosomal subunit. Forms a bridge to the 30S subunit in the 70S ribosome.

One of the primary rRNA binding proteins. Required for association of the 30S and 50S subunits to form the 70S ribosome, for tRNA binding and peptide bond formation. It has been suggested to have peptidyltransferase activity; this is somewhat controversial. Makes several contacts with the 16S rRNA in the 70S ribosome. The chain is Large ribosomal subunit protein uL2 from Chlorobium chlorochromatii (strain CaD3).